The primary structure comprises 75 residues: Large ribosomal subunit protein bL31 (75 aa).

The Zn(2+) site is built by Cys-16, Cys-18, Cys-37, and Cys-40.

The protein belongs to the bacterial ribosomal protein bL31 family. Type A subfamily. Part of the 50S ribosomal subunit. Zn(2+) serves as cofactor.

Its function is as follows. Binds the 23S rRNA. This is Large ribosomal subunit protein bL31 from Baumannia cicadellinicola subsp. Homalodisca coagulata.